The chain runs to 329 residues: Phosphate acyltransferase (329 aa).

This sequence belongs to the PlsX family. Homodimer. Probably interacts with PlsY.

Its subcellular location is the cytoplasm. It catalyses the reaction a fatty acyl-[ACP] + phosphate = an acyl phosphate + holo-[ACP]. It participates in lipid metabolism; phospholipid metabolism. Catalyzes the reversible formation of acyl-phosphate (acyl-PO(4)) from acyl-[acyl-carrier-protein] (acyl-ACP). This enzyme utilizes acyl-ACP as fatty acyl donor, but not acyl-CoA. The chain is Phosphate acyltransferase from Geobacillus sp. (strain WCH70).